Here is an 84-residue protein sequence, read N- to C-terminus: Large ribosomal subunit protein bL31B (84 aa).

The protein belongs to the bacterial ribosomal protein bL31 family. Type B subfamily. In terms of assembly, part of the 50S ribosomal subunit.

The protein is Large ribosomal subunit protein bL31B of Alkalilimnicola ehrlichii (strain ATCC BAA-1101 / DSM 17681 / MLHE-1).